Here is a 1147-residue protein sequence, read N- to C-terminus: PDZ domain-containing protein 8 (1147 aa).

Residues Gly-2–Leu-24 traverse the membrane as a helical segment. The SMP-LTD domain maps to Ala-87–Pro-293. One can recognise a PDZ domain in the interval Thr-365–Ala-448. Phosphoserine occurs at positions 490, 515, and 532. A disordered region spans residues Glu-504–Glu-673. Positions Gln-510–Ser-524 are enriched in polar residues. The span at Lys-557–Gln-576 shows a compositional bias: polar residues. The span at Phe-580 to Pro-596 shows a compositional bias: pro residues. The segment at Lys-833–Cys-884 adopts a Phorbol-ester/DAG-type zinc-finger fold. The segment at Arg-948–Ala-990 is disordered. Ser-960 and Ser-973 each carry phosphoserine. Positions Cys-978–Gly-987 are enriched in polar residues. Residues Pro-1021–Glu-1056 are a coiled coil. Residues Gln-1126–Ser-1137 are compositionally biased toward polar residues. The segment at Gln-1126–Val-1147 is disordered.

Interacts with MSN.

The protein localises to the endoplasmic reticulum membrane. In terms of biological role, molecular tethering protein that connects endoplasmic reticulum and mitochondria membranes. PDZD8-dependent endoplasmic reticulum-mitochondria membrane tethering is essential for endoplasmic reticulum-mitochondria Ca(2+) transfer. In neurons, involved in the regulation of dendritic Ca(2+) dynamics by regulating mitochondrial Ca(2+) uptake in neurons. This is PDZ domain-containing protein 8 from Mus musculus (Mouse).